A 499-amino-acid polypeptide reads, in one-letter code: Cysteine--tRNA ligase (499 aa).

Cysteine 29 is a binding site for Zn(2+). The short motif at 31-41 (VTVYDLCHLGH) is the 'HIGH' region element. 3 residues coordinate Zn(2+): cysteine 213, histidine 238, and glutamate 242. A 'KMSKS' region motif is present at residues 270–274 (KMSKS). Lysine 273 serves as a coordination point for ATP.

It belongs to the class-I aminoacyl-tRNA synthetase family. Monomer. Zn(2+) serves as cofactor.

The protein resides in the cytoplasm. The catalysed reaction is tRNA(Cys) + L-cysteine + ATP = L-cysteinyl-tRNA(Cys) + AMP + diphosphate. This chain is Cysteine--tRNA ligase, found in Prochlorococcus marinus (strain MIT 9303).